A 428-amino-acid chain; its full sequence is C4-dicarboxylate transport protein (428 aa).

The next 8 membrane-spanning stretches (helical) occupy residues Ser-8–Pro-28, Leu-44–Met-64, Val-76–Val-96, Ile-142–Phe-162, Val-184–Met-204, Leu-222–Ala-242, Ile-326–Val-346, and Ile-352–Ile-372.

It belongs to the dicarboxylate/amino acid:cation symporter (DAACS) (TC 2.A.23) family.

It is found in the cell inner membrane. Functionally, responsible for the transport of dicarboxylates such as succinate, fumarate, and malate from the periplasm across the membrane. The polypeptide is C4-dicarboxylate transport protein (Escherichia coli O127:H6 (strain E2348/69 / EPEC)).